We begin with the raw amino-acid sequence, 181 residues long: Oligoribonuclease (181 aa).

Residues leucine 8 to methionine 171 enclose the Exonuclease domain. Residue tyrosine 129 is part of the active site.

Belongs to the oligoribonuclease family.

It is found in the cytoplasm. In terms of biological role, 3'-to-5' exoribonuclease specific for small oligoribonucleotides. The sequence is that of Oligoribonuclease from Chromobacterium violaceum (strain ATCC 12472 / DSM 30191 / JCM 1249 / CCUG 213 / NBRC 12614 / NCIMB 9131 / NCTC 9757 / MK).